Here is a 119-residue protein sequence, read N- to C-terminus: Large ribosomal subunit protein eL31z (119 aa).

This sequence belongs to the eukaryotic ribosomal protein eL31 family.

The polypeptide is Large ribosomal subunit protein eL31z (RPL31A) (Arabidopsis thaliana (Mouse-ear cress)).